Consider the following 399-residue polypeptide: Phosphoglycerate kinase (399 aa).

Residues 21 to 23, Arg36, 59 to 62, Arg120, and Arg158 contribute to the substrate site; these read DFN and HLGR. ATP is bound by residues Lys209, Gly297, Glu328, and 355-358; that span reads GGDS.

Belongs to the phosphoglycerate kinase family. In terms of assembly, monomer.

Its subcellular location is the cytoplasm. It catalyses the reaction (2R)-3-phosphoglycerate + ATP = (2R)-3-phospho-glyceroyl phosphate + ADP. The protein operates within carbohydrate degradation; glycolysis; pyruvate from D-glyceraldehyde 3-phosphate: step 2/5. The chain is Phosphoglycerate kinase from Streptococcus suis (strain 05ZYH33).